The primary structure comprises 177 residues: MNTKIRYGLSAAVLALIGAGASAPQILDQFLDEKEGNHTMAYRDGSGIWTICRGATVVDGKTVFPNMKLSKEKCDQVNAIERDKALAWVERNIKVPLTEPQKAGIASFCPYNIGPGKCFPSTFYKRLNAGDRKGACEAIRWWIKDGGRDCRIRSNNCYGQVIRRDQESALTCWGIEQ.

The Proton donor role is filled by Glu35. The Nucleophile role is filled by Asp44.

This sequence belongs to the glycosyl hydrolase 24 family.

It carries out the reaction Hydrolysis of (1-&gt;4)-beta-linkages between N-acetylmuramic acid and N-acetyl-D-glucosamine residues in a peptidoglycan and between N-acetyl-D-glucosamine residues in chitodextrins.. Essential for lysis of bacterial cell wall, by showing cell wall hydrolyzing activity. This chain is Probable prophage lysozyme (rrrQ), found in Escherichia coli (strain K12).